The sequence spans 2773 residues: Peramine synthetase A (2773 aa).

The adenylation 1 stretch occupies residues 246–644; that stretch reads FEDQVYSQPL…GRKDAQVKIR (399 aa). The Carrier 1 domain occupies 774 to 850; sequence QPTCEMEERM…DLAKNCSQTL (77 aa). Residue Ser-811 is modified to O-(pantetheine 4'-phosphoryl)serine. Positions 888-1301 are condensation; it reads QDAYPCTRLQ…MSSAEDLEQI (414 aa). The adenylation 2 stretch occupies residues 1321-1720; the sequence is ADQVQARPDS…GRKDTQVKVR (400 aa). The methylation (Met) domain stretch occupies residues 1810–1949; that stretch reads IGRDFVGWSS…IIQHLASLGS (140 aa). A disordered region spans residues 2250–2271; sequence MLSESLQQKAPPTARKRLPSTA. The Carrier 2 domain occupies 2267-2345; it reads LPSTAPERAM…HLLQTAAAGV (79 aa). At Ser-2304 the chain carries O-(pantetheine 4'-phosphoryl)serine. The segment at 2397–2715 is thiesterase (TE) domain; it reads TVVLTGANGF…LQDLADTARS (319 aa).

Belongs to the NRP synthetase family. It depends on pantetheine 4'-phosphate as a cofactor.

It carries out the reaction (S)-1-pyrroline-5-carboxylate + L-arginine + S-adenosyl-L-methionine + 2 ATP = peramine + 2 AMP + S-adenosyl-L-homocysteine + 2 diphosphate + H2O + 2 H(+). Functionally, nonribosomal peptide synthetase involved in the biosynthesis of peramine, a pyrrolopyrazine synthesized in association with the grass host that protects the plant from insect herbivory. The single multifunctional NRPS perA seems to be responsible for all catalytic steps in the biosynthesis of peramine. The condensation domain of perA is proposed to catalyze formation of a peptide bond between 1-pyrroline-5-carboxylate and arginine. The methylation domain of perA would catalyze the N-methylation of the alpha-amino group of arginine. The reductase domain is proposed to be responsible for reduction of the thioester and the cyclization to form an iminium ion resulting in release from the peptide synthetase. Deprotonation of this intermediate and oxidation of the pyrroline ring would give rise to peramine. This final oxidation to give the pyrrole functionality may be spontaneous. The protein is Peramine synthetase A of Epichloe festucae (strain Fl1).